We begin with the raw amino-acid sequence, 182 residues long: LIM domain-containing protein C (182 aa).

LIM zinc-binding domains are found at residues Ser-3–Gln-63 and Thr-110–Pro-170.

The protein resides in the cell projection. Its subcellular location is the pseudopodium. It is found in the cytoplasm. The protein localises to the cell cortex. It localises to the cytoskeleton. Binds to F-actin and may modulate the chemotactic response during early development and contribute to the maintenance of the strength of the actin cytoskeleton. In Dictyostelium discoideum (Social amoeba), this protein is LIM domain-containing protein C (limC).